The sequence spans 205 residues: IQ domain-containing protein F1 (205 aa).

2 stretches are compositionally biased toward basic and acidic residues: residues 1–24 (MEEK…KEMP) and 51–68 (ANEK…LSDK). The interval 1 to 68 (MEEKQPQKTK…PENQKKLSDK (68 aa)) is disordered. 2 IQ domains span residues 68-97 (KDTV…SACI) and 124-153 (KEWA…AVRI).

As to quaternary structure, interacts with calmodulin.

It is found in the cytoplasmic vesicle. The protein localises to the secretory vesicle. The protein resides in the acrosome. Its function is as follows. Involved in sperm capacitation and acrosome reaction. This chain is IQ domain-containing protein F1, found in Homo sapiens (Human).